A 313-amino-acid polypeptide reads, in one-letter code: tRNA dimethylallyltransferase (313 aa).

11–18 (GPTASGKT) provides a ligand contact to ATP. Residue 13–18 (TASGKT) participates in substrate binding. Interaction with substrate tRNA stretches follow at residues 36 to 39 (DSAL), 160 to 164 (QRINR), and 241 to 246 (RCVGYR).

The protein belongs to the IPP transferase family. As to quaternary structure, monomer. The cofactor is Mg(2+).

It carries out the reaction adenosine(37) in tRNA + dimethylallyl diphosphate = N(6)-dimethylallyladenosine(37) in tRNA + diphosphate. Its function is as follows. Catalyzes the transfer of a dimethylallyl group onto the adenine at position 37 in tRNAs that read codons beginning with uridine, leading to the formation of N6-(dimethylallyl)adenosine (i(6)A). This chain is tRNA dimethylallyltransferase, found in Haemophilus ducreyi (strain 35000HP / ATCC 700724).